The chain runs to 423 residues: Aspartate--tRNA(Asp) ligase (423 aa).

Glu163 provides a ligand contact to L-aspartate. Residues Gln185 to Lys188 are aspartate. Arg207 provides a ligand contact to L-aspartate. Residues Arg207–Glu209, Arg215–Leu217, and Glu346 contribute to the ATP site. The Mg(2+) site is built by Glu346 and Ser349. 2 residues coordinate L-aspartate: Ser349 and Arg353. Residue Gly394 to Arg397 participates in ATP binding.

This sequence belongs to the class-II aminoacyl-tRNA synthetase family. Type 2 subfamily. In terms of assembly, homodimer. Mg(2+) serves as cofactor.

It is found in the cytoplasm. The catalysed reaction is tRNA(Asp) + L-aspartate + ATP = L-aspartyl-tRNA(Asp) + AMP + diphosphate. Its function is as follows. Catalyzes the attachment of L-aspartate to tRNA(Asp) in a two-step reaction: L-aspartate is first activated by ATP to form Asp-AMP and then transferred to the acceptor end of tRNA(Asp). This is Aspartate--tRNA(Asp) ligase from Picrophilus torridus (strain ATCC 700027 / DSM 9790 / JCM 10055 / NBRC 100828 / KAW 2/3).